We begin with the raw amino-acid sequence, 343 residues long: tRNA N6-adenosine threonylcarbamoyltransferase (343 aa).

Fe cation contacts are provided by His114 and His118. Substrate contacts are provided by residues 137–141 (LVSGG), Asp171, Gly184, Asp188, and Asn278. Fe cation is bound at residue Asp306.

It belongs to the KAE1 / TsaD family. Fe(2+) is required as a cofactor.

The protein localises to the cytoplasm. The enzyme catalyses L-threonylcarbamoyladenylate + adenosine(37) in tRNA = N(6)-L-threonylcarbamoyladenosine(37) in tRNA + AMP + H(+). Required for the formation of a threonylcarbamoyl group on adenosine at position 37 (t(6)A37) in tRNAs that read codons beginning with adenine. Is involved in the transfer of the threonylcarbamoyl moiety of threonylcarbamoyl-AMP (TC-AMP) to the N6 group of A37, together with TsaE and TsaB. TsaD likely plays a direct catalytic role in this reaction. This Acidothermus cellulolyticus (strain ATCC 43068 / DSM 8971 / 11B) protein is tRNA N6-adenosine threonylcarbamoyltransferase.